A 427-amino-acid polypeptide reads, in one-letter code: MHDPSELLEDGPAAVRRLARRRYDLDLAALEKAVRRRSEAQAEVTRLRTELNRTSRARGRSGPPSEEEKEAARALRADVQQAEATARTAGHDLTELLLGIPNVPLDSVPDGDTDQEAVEVRRWGRPPHDAGTDARHHSDIGESLGILDGPAAAKLSGSRFSVGRGAGARLERALADFFLDLHTGEHGYTEYSVPFLVNRDTMTGTGQLPKFEDDLFRTQVGDRELFLIPTAEVPLTNLVAQQLLDARALPYAFTARTPCFRAEAGAYGRDTRGILRLHQFEKVELVRVCAPEDAPAQLELMVGHAEECLRRLELSYRVVQLPAGDLGFSARMTYDIEVWLPGSDAYREISSVSDCGTFQARRADIRHKRADGRKAPAATLNGSALPIGRTVAALLEQGVREDGSVLLPEALVPYTGFRRILPGGATA.

The span at 35–53 (RRRSEAQAEVTRLRTELNR) shows a compositional bias: basic and acidic residues. Residues 35–72 (RRRSEAQAEVTRLRTELNRTSRARGRSGPPSEEEKEAA) form a disordered region. Residue 230 to 232 (TAE) coordinates L-serine. ATP is bound at residue 261-263 (RAE). E284 is a binding site for L-serine. An ATP-binding site is contributed by 348–351 (EISS). S383 is an L-serine binding site.

This sequence belongs to the class-II aminoacyl-tRNA synthetase family. Type-1 seryl-tRNA synthetase subfamily. As to quaternary structure, homodimer. The tRNA molecule binds across the dimer.

It is found in the cytoplasm. It carries out the reaction tRNA(Ser) + L-serine + ATP = L-seryl-tRNA(Ser) + AMP + diphosphate + H(+). The catalysed reaction is tRNA(Sec) + L-serine + ATP = L-seryl-tRNA(Sec) + AMP + diphosphate + H(+). It functions in the pathway aminoacyl-tRNA biosynthesis; selenocysteinyl-tRNA(Sec) biosynthesis; L-seryl-tRNA(Sec) from L-serine and tRNA(Sec): step 1/1. Functionally, catalyzes the attachment of serine to tRNA(Ser). Is also able to aminoacylate tRNA(Sec) with serine, to form the misacylated tRNA L-seryl-tRNA(Sec), which will be further converted into selenocysteinyl-tRNA(Sec). The sequence is that of Serine--tRNA ligase 2 from Streptomyces avermitilis (strain ATCC 31267 / DSM 46492 / JCM 5070 / NBRC 14893 / NCIMB 12804 / NRRL 8165 / MA-4680).